A 349-amino-acid polypeptide reads, in one-letter code: Holliday junction branch migration complex subunit RuvB (349 aa).

The large ATPase domain (RuvB-L) stretch occupies residues Met1–Tyr183. ATP is bound by residues Leu22, Arg23, Gly64, Lys67, Thr68, Thr69, Glu130–Phe132, Arg173, Tyr183, and Arg220. Thr68 provides a ligand contact to Mg(2+). The interval Thr184 to Glu254 is small ATPAse domain (RuvB-S). The head domain (RuvB-H) stretch occupies residues Ser257–Glu349. Residues Arg293, Arg312, and Arg317 each coordinate DNA.

The protein belongs to the RuvB family. Homohexamer. Forms an RuvA(8)-RuvB(12)-Holliday junction (HJ) complex. HJ DNA is sandwiched between 2 RuvA tetramers; dsDNA enters through RuvA and exits via RuvB. An RuvB hexamer assembles on each DNA strand where it exits the tetramer. Each RuvB hexamer is contacted by two RuvA subunits (via domain III) on 2 adjacent RuvB subunits; this complex drives branch migration. In the full resolvosome a probable DNA-RuvA(4)-RuvB(12)-RuvC(2) complex forms which resolves the HJ.

It is found in the cytoplasm. It carries out the reaction ATP + H2O = ADP + phosphate + H(+). The RuvA-RuvB-RuvC complex processes Holliday junction (HJ) DNA during genetic recombination and DNA repair, while the RuvA-RuvB complex plays an important role in the rescue of blocked DNA replication forks via replication fork reversal (RFR). RuvA specifically binds to HJ cruciform DNA, conferring on it an open structure. The RuvB hexamer acts as an ATP-dependent pump, pulling dsDNA into and through the RuvAB complex. RuvB forms 2 homohexamers on either side of HJ DNA bound by 1 or 2 RuvA tetramers; 4 subunits per hexamer contact DNA at a time. Coordinated motions by a converter formed by DNA-disengaged RuvB subunits stimulates ATP hydrolysis and nucleotide exchange. Immobilization of the converter enables RuvB to convert the ATP-contained energy into a lever motion, pulling 2 nucleotides of DNA out of the RuvA tetramer per ATP hydrolyzed, thus driving DNA branch migration. The RuvB motors rotate together with the DNA substrate, which together with the progressing nucleotide cycle form the mechanistic basis for DNA recombination by continuous HJ branch migration. Branch migration allows RuvC to scan DNA until it finds its consensus sequence, where it cleaves and resolves cruciform DNA. This is Holliday junction branch migration complex subunit RuvB from Rhodopseudomonas palustris (strain TIE-1).